A 98-amino-acid polypeptide reads, in one-letter code: MSVSIKPLEDRIVIQQVEAEQTTASGLVIPDTAKEKPQEGEVVAVGPGRIDDNGNRVPLDVAVGDKVIYSKYGGTEVKYDGQDLLVLSARDVLAVIER.

The protein belongs to the GroES chaperonin family. As to quaternary structure, heptamer of 7 subunits arranged in a ring. Interacts with the chaperonin GroEL.

It is found in the cytoplasm. Its function is as follows. Together with the chaperonin GroEL, plays an essential role in assisting protein folding. The GroEL-GroES system forms a nano-cage that allows encapsulation of the non-native substrate proteins and provides a physical environment optimized to promote and accelerate protein folding. GroES binds to the apical surface of the GroEL ring, thereby capping the opening of the GroEL channel. The protein is Co-chaperonin GroES of Clavibacter michiganensis subsp. michiganensis (strain NCPPB 382).